The following is a 1268-amino-acid chain: ATP-dependent helicase/nuclease subunit A (1268 aa).

One can recognise a UvrD-like helicase ATP-binding domain in the interval 3-476; it reads TKWTEEQELA…IMLYKNFRSR (474 aa). 24–31 contacts ATP; sequence AAAGSGKT. Residues 528–824 form the UvrD-like helicase C-terminal domain; sequence IENLKVAGDI…RIMSIHKSKG (297 aa).

It belongs to the helicase family. AddA subfamily. As to quaternary structure, heterodimer of AddA and AddB/RexB. Mg(2+) is required as a cofactor.

The catalysed reaction is Couples ATP hydrolysis with the unwinding of duplex DNA by translocating in the 3'-5' direction.. It carries out the reaction ATP + H2O = ADP + phosphate + H(+). In terms of biological role, the heterodimer acts as both an ATP-dependent DNA helicase and an ATP-dependent, dual-direction single-stranded exonuclease. Recognizes the chi site generating a DNA molecule suitable for the initiation of homologous recombination. The AddA nuclease domain is required for chi fragment generation; this subunit has the helicase and 3' -&gt; 5' nuclease activities. In Clostridium perfringens (strain 13 / Type A), this protein is ATP-dependent helicase/nuclease subunit A.